Here is a 221-residue protein sequence, read N- to C-terminus: uncharacterized protein (221 aa).

The disordered stretch occupies residues T40–P162. The span at P47 to A60 shows a compositional bias: polar residues. Low complexity predominate over residues S82 to T92.

This is an uncharacterized protein from Homo sapiens (Human).